The following is a 693-amino-acid chain: Oxysterol-binding protein-related protein 2B (693 aa).

Residues methionine 1–glycine 15 show a composition bias toward polar residues. The segment at methionine 1–leucine 22 is disordered. The PH domain maps to glycine 25 to glycine 154. Positions glutamate 207–serine 239 form a coiled coil. 2 disordered regions span residues leucine 256–aspartate 298 and glutamate 600–arginine 639. Acidic residues predominate over residues glutamine 274 to glutamate 284. 2 stretches are compositionally biased toward basic and acidic residues: residues alanine 285–phenylalanine 294 and glutamate 600–glutamine 635. Residues aspartate 612–glutamate 643 are a coiled coil.

Belongs to the OSBP family. As to expression, expressed in roots, leaves, stems and flowers.

In terms of biological role, may be involved in the transport of sterols. This chain is Oxysterol-binding protein-related protein 2B (ORP2B), found in Arabidopsis thaliana (Mouse-ear cress).